Reading from the N-terminus, the 388-residue chain is Na(+)/H(+) antiporter NhaA (388 aa).

Topologically, residues 1-11 are cytoplasmic; it reads MKHLHRFFSSD. A helical membrane pass occupies residues 12–31; it reads ASGGIILIIAAVLAMIMANS. Residues 32–58 are Periplasmic-facing; the sequence is GATSGWYHDFLETPVQLRVGTLEINKN. The helical transmembrane segment at 59–80 threads the bilayer; the sequence is MLLWINDALMAVFFLLVGLEVK. The Cytoplasmic portion of the chain corresponds to 81–96; it reads RELMQGSLASLRQAAF. The helical transmembrane segment at 97-116 threads the bilayer; sequence PVIAAIGGMIVPALLYLAFN. The Periplasmic segment spans residues 117–122; that stretch reads YADPIT. Residues 123 to 130 form a helical membrane-spanning segment; sequence REGWAIPA. The Cytoplasmic segment spans residues 131–154; the sequence is ATDIAFALGVLALLGSRVPLALKI. Residues 155–176 form a helical membrane-spanning segment; that stretch reads FLMALAIIDDLGAIIIIALFYT. Residues 177 to 180 lie on the Periplasmic side of the membrane; the sequence is NDLS. The chain crosses the membrane as a helical span at residues 181-200; that stretch reads MASLGVAAVAIAVLVVLNLC. Topologically, residues 201–204 are cytoplasmic; it reads GVRR. The chain crosses the membrane as a helical span at residues 205 to 222; that stretch reads TGVYILVGVVLWTAVLKS. Residue Gly-223 is a topological domain, periplasmic. A helical membrane pass occupies residues 224–236; the sequence is VHATLAGVIVGFF. The Cytoplasmic segment spans residues 237-253; it reads IPLKEKHGRSPAKRLEH. Residues 254 to 272 traverse the membrane as a helical segment; it reads VLHPWVAYLILPLFAFANA. Residues 273–286 are Periplasmic-facing; it reads GVSLQGVTLEGLTS. A helical membrane pass occupies residues 287-310; sequence ILPLGIIAGLLIGKPLGISLFCWL. At 311–339 the chain is on the cytoplasmic side; sequence ALRLKLAHLPEGTTYQQIMAVGILCGIGF. A helical transmembrane segment spans residues 340 to 350; that stretch reads TMSIFIASLAF. Topologically, residues 351-357 are periplasmic; that stretch reads GSVDPEL. A helical membrane pass occupies residues 358 to 380; that stretch reads INWAKLGILVGSISSAVIGYSWL. The Cytoplasmic segment spans residues 381–388; it reads RVRLRPSV.

The protein belongs to the NhaA Na(+)/H(+) (TC 2.A.33) antiporter family.

The protein localises to the cell inner membrane. The catalysed reaction is Na(+)(in) + 2 H(+)(out) = Na(+)(out) + 2 H(+)(in). Its function is as follows. Na(+)/H(+) antiporter that extrudes sodium in exchange for external protons. This chain is Na(+)/H(+) antiporter NhaA, found in Escherichia coli O1:K1 / APEC.